Reading from the N-terminus, the 209-residue chain is Xanthine phosphoribosyltransferase 1 (209 aa).

Phosphoserine is present on serine 79.

Its subcellular location is the cytoplasm. May act as a xanthine phosphoribosyltransferase involved in the synthesis of purine nucleotides. Such activity is however unclear in vivo. The polypeptide is Xanthine phosphoribosyltransferase 1 (XPT1) (Saccharomyces cerevisiae (strain ATCC 204508 / S288c) (Baker's yeast)).